A 316-amino-acid polypeptide reads, in one-letter code: Sulfate adenylyltransferase subunit 2 (316 aa).

The segment at 297 to 316 (RAIDRDQSGSMEKKKREGYF) is disordered.

It belongs to the PAPS reductase family. CysD subfamily. As to quaternary structure, heterodimer composed of CysD, the smaller subunit, and CysN.

The enzyme catalyses sulfate + ATP + H(+) = adenosine 5'-phosphosulfate + diphosphate. It participates in sulfur metabolism; hydrogen sulfide biosynthesis; sulfite from sulfate: step 1/3. Its function is as follows. With CysN forms the ATP sulfurylase (ATPS) that catalyzes the adenylation of sulfate producing adenosine 5'-phosphosulfate (APS) and diphosphate, the first enzymatic step in sulfur assimilation pathway. APS synthesis involves the formation of a high-energy phosphoric-sulfuric acid anhydride bond driven by GTP hydrolysis by CysN coupled to ATP hydrolysis by CysD. The chain is Sulfate adenylyltransferase subunit 2 from Allorhizobium ampelinum (strain ATCC BAA-846 / DSM 112012 / S4) (Agrobacterium vitis (strain S4)).